Reading from the N-terminus, the 260-residue chain is (+)-borneol dehydrogenase 1 (260 aa).

NAD(+)-binding positions include G20 to G26, D44, D67 to V68, and N94 to G96. The Proton donor role is filled by S148. NAD(+) is bound by residues Y161, K165, and T196. Y161 acts as the Proton acceptor in catalysis. Catalysis depends on K165, which acts as the Proton donor/acceptor.

The protein belongs to the short-chain dehydrogenases/reductases (SDR) family.

The catalysed reaction is (1R,2S,4R)-borneol + NAD(+) = (1R,4R)-camphor + NADH + H(+). Functionally, involved in the biosynthesis of monoterpene natural products related to camphor. Catalayzes the oxidation of (+)-borneol to (+)-camphor. Shows absolute selectivity towards (+)-borneol. Catalyzes the oxidation of (+)-isoborneol to (-)-camphor. Shows absolute selectivity towards (+)-isoborneol. In Salvia officinalis (Sage), this protein is (+)-borneol dehydrogenase 1.